Reading from the N-terminus, the 430-residue chain is DNA-binding protein cre-1 (430 aa).

The segment covering 1-19 (MQRVQSAVDFSNLLNPSES) has biased composition (polar residues). 4 disordered regions span residues 1 to 77 (MQRV…LPRP), 97 to 187 (IRTH…PHSY), 265 to 340 (SRSH…RNLS), and 357 to 430 (LDGQ…MDRL). Residues 30–46 (PRQQTAQPQQQQQQPQP) show a composition bias toward low complexity. C2H2-type zinc fingers lie at residues 78-100 (YKCPLCDKAFHRLEHQTRHIRTH) and 106-130 (HACQFPGCSKKFSRSDELTRHSRIH). Residues 97-106 (IRTHTGEKPH) show a composition bias toward basic and acidic residues. Composition is skewed to polar residues over residues 130–147 (HSNPNSRRGNKGQQQQQH) and 175–187 (AMSSPNVSPPHSY). Residues 268 to 277 (HSHEDHDDHY) are compositionally biased toward basic and acidic residues. Residues 289 to 303 (PNSPNSTAPSSPTFS) are compositionally biased toward low complexity. The segment covering 412–422 (SVRNSSSTSLS) has biased composition (polar residues).

This sequence belongs to the creA/MIG C2H2-type zinc-finger protein family.

Its subcellular location is the nucleus. Functionally, involved in carbon catabolite repression. Represses the transcription of a number of genes by binding to a GC-rich region in their promoter. In Neurospora crassa (strain ATCC 24698 / 74-OR23-1A / CBS 708.71 / DSM 1257 / FGSC 987), this protein is DNA-binding protein cre-1 (cre-1).